A 218-amino-acid chain; its full sequence is N-(5'-phosphoribosyl)anthranilate isomerase (218 aa).

This sequence belongs to the TrpF family.

It carries out the reaction N-(5-phospho-beta-D-ribosyl)anthranilate = 1-(2-carboxyphenylamino)-1-deoxy-D-ribulose 5-phosphate. It participates in amino-acid biosynthesis; L-tryptophan biosynthesis; L-tryptophan from chorismate: step 3/5. In Rhodopseudomonas palustris (strain BisB18), this protein is N-(5'-phosphoribosyl)anthranilate isomerase.